A 687-amino-acid polypeptide reads, in one-letter code: Amine oxidase [copper-containing] gamma 2 (687 aa).

Positions 1-24 (MVELSFSQLLVLLLSLLFLFTTLA) are cleaved as a signal peptide. Asn-154 carries N-linked (GlcNAc...) asparagine glycosylation. Cysteines 169 and 191 form a disulfide. Asn-244 carries an N-linked (GlcNAc...) asparagine glycan. Residue 333–344 (YMDAGEFGLGPS) participates in substrate binding. Asp-335 acts as the Proton acceptor in catalysis. Residues Cys-354 and Cys-380 are joined by a disulfide bond. Position 420 to 425 (420 to 425 (VGNYDY)) interacts with substrate. The active-site Schiff-base intermediate with substrate; via topaquinone is the Tyr-423. 2',4',5'-topaquinone is present on Tyr-423. Positions 480 and 482 each coordinate Cu cation. Mn(2+) contacts are provided by Asp-489, Met-490, and Asp-491. Asn-497 and Asn-598 each carry an N-linked (GlcNAc...) asparagine glycan. Residues Asp-632 and Ile-633 each coordinate Mn(2+). His-643 serves as a coordination point for Cu cation.

This sequence belongs to the copper/topaquinone oxidase family. Homodimer. The cofactor is Cu cation. Requires Zn(2+) as cofactor. L-topaquinone serves as cofactor. It depends on Mn(2+) as a cofactor. Topaquinone (TPQ) is generated by copper-dependent autoxidation of a specific tyrosyl residue. Expressed in roots, leaves and cotyledons.

Its subcellular location is the secreted. The protein resides in the extracellular space. It is found in the apoplast. The catalysed reaction is a primary methyl amine + O2 + H2O = an aldehyde + H2O2 + NH4(+). It participates in amine and polyamine degradation; putrescine degradation. Copper amine oxidase that can use putrescine and spermidine as substrates. The chain is Amine oxidase [copper-containing] gamma 2 from Arabidopsis thaliana (Mouse-ear cress).